Reading from the N-terminus, the 178-residue chain is GPI mannosyltransferase 2 subunit C167.09 (178 aa).

Residues 1–20 (MREFRLIFVLLFFLPSFAIA) form the signal peptide. The Lumenal portion of the chain corresponds to 21 to 152 (NTEIINVETG…LGFLPKSVLP (132 aa)). N-linked (GlcNAc...) asparagine glycans are attached at residues Asn-48, Asn-49, Asn-106, Asn-115, and Asn-122. Residues 153 to 173 (IVGFVFVIILIALICMTNLFI) traverse the membrane as a helical segment. Topologically, residues 174-178 (KHKRD) are cytoplasmic.

As to quaternary structure, part of the GPI mannosyltransferase 2 complex composed of gpi18 and C167.09.

It is found in the endoplasmic reticulum membrane. It participates in glycolipid biosynthesis; glycosylphosphatidylinositol-anchor biosynthesis. Its function is as follows. Essential component of the GPI mannosyltransferase 2 complex. Responsible for the transfer of the second mannose to the glycosylphosphatidylinositol during GPI precursor assembly. The chain is GPI mannosyltransferase 2 subunit C167.09 from Schizosaccharomyces pombe (strain 972 / ATCC 24843) (Fission yeast).